The following is a 117-amino-acid chain: Large ribosomal subunit protein bL20 (117 aa).

It belongs to the bacterial ribosomal protein bL20 family.

In terms of biological role, binds directly to 23S ribosomal RNA and is necessary for the in vitro assembly process of the 50S ribosomal subunit. It is not involved in the protein synthesizing functions of that subunit. The protein is Large ribosomal subunit protein bL20 of Campylobacter lari (strain RM2100 / D67 / ATCC BAA-1060).